We begin with the raw amino-acid sequence, 264 residues long: Methionine aminopeptidase (264 aa).

Residue His79 participates in substrate binding. Residues Asp97, Asp108, and His171 each contribute to the a divalent metal cation site. Residue His178 participates in substrate binding. 2 residues coordinate a divalent metal cation: Glu204 and Glu235.

Belongs to the peptidase M24A family. Methionine aminopeptidase type 1 subfamily. In terms of assembly, monomer. It depends on Co(2+) as a cofactor. Requires Zn(2+) as cofactor. The cofactor is Mn(2+). Fe(2+) is required as a cofactor.

It carries out the reaction Release of N-terminal amino acids, preferentially methionine, from peptides and arylamides.. Its function is as follows. Removes the N-terminal methionine from nascent proteins. The N-terminal methionine is often cleaved when the second residue in the primary sequence is small and uncharged (Met-Ala-, Cys, Gly, Pro, Ser, Thr, or Val). Requires deformylation of the N(alpha)-formylated initiator methionine before it can be hydrolyzed. The sequence is that of Methionine aminopeptidase from Escherichia coli O157:H7.